The primary structure comprises 305 residues: HPr kinase/phosphorylase (305 aa).

Residues histidine 138 and lysine 159 contribute to the active site. Glycine 153–serine 160 serves as a coordination point for ATP. Serine 160 lines the Mg(2+) pocket. The active-site Proton acceptor; for phosphorylation activity. Proton donor; for dephosphorylation activity is the aspartate 177. Positions isoleucine 201–aspartate 210 are important for the catalytic mechanism of both phosphorylation and dephosphorylation. Position 202 (glutamate 202) interacts with Mg(2+). The active site involves arginine 243. Positions proline 264–arginine 269 are important for the catalytic mechanism of dephosphorylation.

This sequence belongs to the HPrK/P family. As to quaternary structure, homohexamer. The cofactor is Mg(2+).

It carries out the reaction [HPr protein]-L-serine + ATP = [HPr protein]-O-phospho-L-serine + ADP + H(+). It catalyses the reaction [HPr protein]-O-phospho-L-serine + phosphate + H(+) = [HPr protein]-L-serine + diphosphate. Catalyzes the ATP- as well as the pyrophosphate-dependent phosphorylation of a specific serine residue in HPr, a phosphocarrier protein of the phosphoenolpyruvate-dependent sugar phosphotransferase system (PTS). HprK/P also catalyzes the pyrophosphate-producing, inorganic phosphate-dependent dephosphorylation (phosphorolysis) of seryl-phosphorylated HPr (P-Ser-HPr). The two antagonistic activities of HprK/P are regulated by several intracellular metabolites, which change their concentration in response to the absence or presence of rapidly metabolisable carbon sources (glucose, fructose, etc.) in the growth medium. Therefore, by controlling the phosphorylation state of HPr, HPrK/P is a sensor enzyme that plays a major role in the regulation of carbon metabolism and sugar transport: it mediates carbon catabolite repression (CCR), and regulates PTS-catalyzed carbohydrate uptake and inducer exclusion. The polypeptide is HPr kinase/phosphorylase (Thermoanaerobacter pseudethanolicus (strain ATCC 33223 / 39E) (Clostridium thermohydrosulfuricum)).